The sequence spans 144 residues: Ribosome maturation factor RimP (144 aa).

The protein belongs to the RimP family.

It localises to the cytoplasm. Required for maturation of 30S ribosomal subunits. The sequence is that of Ribosome maturation factor RimP from Methylobacillus flagellatus (strain ATCC 51484 / DSM 6875 / VKM B-1610 / KT).